Here is a 361-residue protein sequence, read N- to C-terminus: 3-dehydroquinate synthase (361 aa).

Residues asparagine 41, 70–75, 104–108, 128–129, lysine 141, lysine 150, 150–151, and 168–171 each bind NAD(+); these read DGEQYK, GVIGD, TT, KN, and CLTT. Residues glutamate 183, histidine 246, and histidine 263 each coordinate Zn(2+).

The protein belongs to the sugar phosphate cyclases superfamily. Dehydroquinate synthase family. NAD(+) serves as cofactor. It depends on Co(2+) as a cofactor. The cofactor is Zn(2+).

Its subcellular location is the cytoplasm. The enzyme catalyses 7-phospho-2-dehydro-3-deoxy-D-arabino-heptonate = 3-dehydroquinate + phosphate. It functions in the pathway metabolic intermediate biosynthesis; chorismate biosynthesis; chorismate from D-erythrose 4-phosphate and phosphoenolpyruvate: step 2/7. Functionally, catalyzes the conversion of 3-deoxy-D-arabino-heptulosonate 7-phosphate (DAHP) to dehydroquinate (DHQ). The protein is 3-dehydroquinate synthase of Vibrio cholerae serotype O1 (strain ATCC 39315 / El Tor Inaba N16961).